The chain runs to 956 residues: MAM domain-containing glycosylphosphatidylinositol anchor protein 1 (956 aa).

The first 18 residues, 1-18, serve as a signal peptide directing secretion; sequence MEVTCLLLLALIPFHCRG. 2 Ig-like domains span residues 24–123 and 132–230; these read PAQA…KSIR and PVLT…KAIT. Residue Asn-42 is glycosylated (N-linked (GlcNAc...) asparagine). 2 disulfide bridges follow: Cys-60/Cys-108 and Cys-157/Cys-214. Asn-235, Asn-247, Asn-257, and Asn-307 each carry an N-linked (GlcNAc...) asparagine glycan. 4 consecutive Ig-like domains span residues 240–323, 338–432, 440–532, and 539–650; these read PALK…KTVN, PDMI…IEVN, PTIS…AQVQ, and PEVE…PTRS. Cystine bridges form between Cys-262-Cys-308 and Cys-357-Cys-415. Asn-432 is a glycosylation site (N-linked (GlcNAc...) asparagine). Disulfide bonds link Cys-463–Cys-514 and Cys-560–Cys-616. The Fibronectin type-III domain maps to 627 to 744; the sequence is CLFQVSAKAY…SRIIHYTEPI (118 aa). The region spanning 752–919 is the MAM domain; the sequence is NTCHFEDEKI…VTLKKGECPR (168 aa). Polar residues predominate over residues 780–789; it reads LTQNPKRSPN. Positions 780–799 are disordered; the sequence is LTQNPKRSPNTGPPTDISGT. Ser-933 carries GPI-anchor amidated serine lipidation. The propeptide at 934–956 is removed in mature form; sequence GAPRLSSLQLWGSMAIFLLALQR.

As to quaternary structure, interacts heterophilically through its MAM domain with proteins in axon-rich regions and through its Ig-like domains with proteins in differentiating muscle. Interacts (through the Ig-like domains) with NLGN2. As to expression, expressed by neurons in layers 2 and 3 of the cortex during their migration and settling in the cortical plate. Also found in layers 4 and 6a. From 9.5 dpc-13.5 dpc, detected in the marginal zone of the developing cortex. At 16.5 dpc, modest expression is found in the intermediate zone. At postnatal day 1, evident in the superficial cortical plate. By postnatal day 7, expression is limited to layers 2 and 3 throughout most of the cortex.

The protein resides in the cell membrane. Its function is as follows. Required for radial migration of cortical neurons in the superficial layer of the neocortex. Plays a role in the formation or maintenance of inhibitory synapses. May function by inhibiting the activity of NLGN2. The polypeptide is MAM domain-containing glycosylphosphatidylinositol anchor protein 1 (Mus musculus (Mouse)).